We begin with the raw amino-acid sequence, 152 residues long: Transcriptional regulator MraZ (152 aa).

SpoVT-AbrB domains lie at 5–52 and 81–124; these read ATMV…PLPE and ASEC…DEQT.

The protein belongs to the MraZ family. Forms oligomers.

It is found in the cytoplasm. Its subcellular location is the nucleoid. Functionally, negatively regulates its own expression and that of the subsequent genes in the proximal part of the division and cell wall (dcw) gene cluster. Acts by binding directly to DNA. May also regulate the expression of genes outside the dcw cluster. In Yersinia pseudotuberculosis serotype O:1b (strain IP 31758), this protein is Transcriptional regulator MraZ.